Here is an 850-residue protein sequence, read N- to C-terminus: Mitogen-activated protein kinase kinase kinase 11 (850 aa).

S11 carries the post-translational modification Phosphoserine. Residues 16–35 (WNGSGSGGGGGTGGVRPEGS) form a disordered region. The segment covering 17 to 31 (NGSGSGGGGGTGGVR) has biased composition (gly residues). S35 carries the post-translational modification Phosphoserine. The region spanning 42–106 (YANPVWTALF…PSNYVSRGGG (65 aa)) is the SH3 domain. The 263-residue stretch at 118 to 380 (LRLEEVIGIG…ASILQQLEAL (263 aa)) folds into the Protein kinase domain. Residues 124-132 (IGIGGFGKV) and K145 each bind ATP. The active-site Proton acceptor is D242. T278 carries the post-translational modification Phosphothreonine; by autocatalysis. A Phosphoserine; by autocatalysis and MAP4K1 modification is found at S282. S395 is modified (phosphoserine). Leucine-zipper stretches follow at residues 404–425 (IQGL…EEEL) and 439–460 (LRRR…ELTL). Residues S508 and S525 each carry the phosphoserine modification. A disordered region spans residues 535–644 (QLEPTESGQT…SSGTPKLIQR (110 aa)). The segment covering 538–547 (PTESGQTWGR) has biased composition (polar residues). A phosphoserine mark is found at S549, S556, and S557. The span at 551 to 563 (RRLEDSSNGERRA) shows a compositional bias: basic and acidic residues. Over residues 598–610 (SSPLGSPSTPPAL) the composition is skewed to low complexity. Phosphoserine is present on S655. A disordered region spans residues 657 to 850 (GLGRDLQPPG…QAPWAPEAGP (194 aa)). Over residues 677 to 693 (TAPPPAQMPSPCPPELP) the composition is skewed to pro residues. Polar residues predominate over residues 700 to 711 (LSQTTPDAHSSP). S709 is modified (phosphoserine). Phosphothreonine is present on T712. S728, S731, S743, S751, S761, S773, S792, S796, and S818 each carry phosphoserine. Residues 763–776 (PLGLISRPRPSPLR) are compositionally biased toward low complexity. The span at 790–802 (RPSPLPSPQPAPR) shows a compositional bias: pro residues. Low complexity predominate over residues 803–819 (RAPWTLFPDSDPFWDSP).

This sequence belongs to the protein kinase superfamily. STE Ser/Thr protein kinase family. MAP kinase kinase kinase subfamily. In terms of assembly, homodimer; undergoes dimerization during activation. Interacts with MAP2K4/MKK4 and MAP2K7/MKK7. Found in a complex with SH3RF1, RAC1, MAP2K7/MKK7, MAPK8IP1/JIP1 and MAPK8/JNK1. Requires Mg(2+) as cofactor. In terms of processing, autophosphorylation on serine and threonine residues within the activation loop plays a role in enzyme activation. Thr-278 is likely to be the main autophosphorylation site. Phosphorylation of Ser-556 and Ser-557 is induced by CDC42.

It is found in the cytoplasm. Its subcellular location is the cytoskeleton. The protein resides in the microtubule organizing center. The protein localises to the centrosome. The catalysed reaction is L-seryl-[protein] + ATP = O-phospho-L-seryl-[protein] + ADP + H(+). The enzyme catalyses L-threonyl-[protein] + ATP = O-phospho-L-threonyl-[protein] + ADP + H(+). Homodimerization via the leucine zipper domains is required for autophosphorylation and subsequent activation. In terms of biological role, activates the JUN N-terminal pathway. Required for serum-stimulated cell proliferation and for mitogen and cytokine activation of MAPK14 (p38), MAPK3 (ERK) and MAPK8 (JNK1) through phosphorylation and activation of MAP2K4/MKK4 and MAP2K7/MKK7. Plays a role in mitogen-stimulated phosphorylation and activation of BRAF, but does not phosphorylate BRAF directly. Influences microtubule organization during the cell cycle. The sequence is that of Mitogen-activated protein kinase kinase kinase 11 (Map3k11) from Mus musculus (Mouse).